The following is a 349-amino-acid chain: Protein-glutamate methylesterase/protein-glutamine glutaminase 1 (349 aa).

The Response regulatory domain occupies Arg-4–Arg-119. Asp-53 carries the post-translational modification 4-aspartylphosphate. A CheB-type methylesterase domain is found at Pro-159–Arg-349. Active-site residues include Ser-172, His-198, and Asp-293.

It belongs to the CheB family. In terms of processing, phosphorylated by CheA. Phosphorylation of the N-terminal regulatory domain activates the methylesterase activity.

Its subcellular location is the cytoplasm. The enzyme catalyses [protein]-L-glutamate 5-O-methyl ester + H2O = L-glutamyl-[protein] + methanol + H(+). The catalysed reaction is L-glutaminyl-[protein] + H2O = L-glutamyl-[protein] + NH4(+). Its function is as follows. Involved in chemotaxis. Part of a chemotaxis signal transduction system that modulates chemotaxis in response to various stimuli. Catalyzes the demethylation of specific methylglutamate residues introduced into the chemoreceptors (methyl-accepting chemotaxis proteins or MCP) by CheR. Also mediates the irreversible deamidation of specific glutamine residues to glutamic acid. This Anaeromyxobacter dehalogenans (strain 2CP-C) protein is Protein-glutamate methylesterase/protein-glutamine glutaminase 1.